The primary structure comprises 279 residues: Shikimate dehydrogenase (NADP(+)) (279 aa).

Residues 20–22 and Thr-67 each bind shikimate; that span reads SRS. The active-site Proton acceptor is the Lys-71. An NADP(+)-binding site is contributed by Asp-83. The shikimate site is built by Asn-92 and Asp-108. Residues 134 to 138 and Leu-223 each bind NADP(+); that span reads GAGGA. Residue Tyr-225 participates in shikimate binding. Gly-246 serves as a coordination point for NADP(+).

This sequence belongs to the shikimate dehydrogenase family. Homodimer.

It carries out the reaction shikimate + NADP(+) = 3-dehydroshikimate + NADPH + H(+). Its pathway is metabolic intermediate biosynthesis; chorismate biosynthesis; chorismate from D-erythrose 4-phosphate and phosphoenolpyruvate: step 4/7. In terms of biological role, involved in the biosynthesis of the chorismate, which leads to the biosynthesis of aromatic amino acids. Catalyzes the reversible NADPH linked reduction of 3-dehydroshikimate (DHSA) to yield shikimate (SA). The polypeptide is Shikimate dehydrogenase (NADP(+)) (Cereibacter sphaeroides (strain ATCC 17023 / DSM 158 / JCM 6121 / CCUG 31486 / LMG 2827 / NBRC 12203 / NCIMB 8253 / ATH 2.4.1.) (Rhodobacter sphaeroides)).